The primary structure comprises 445 residues: tRNA modification GTPase MnmE (445 aa).

The (6S)-5-formyl-5,6,7,8-tetrahydrofolate site is built by arginine 20, glutamate 79, and lysine 119. The TrmE-type G domain maps to 215–371 (GLKLAIIGPP…ILKNIENIAE (157 aa)). Residue asparagine 225 participates in K(+) binding. Residues 225-230 (NTGKSS), 244-250 (SNIAGTT), and 269-272 (DTAG) each bind GTP. A Mg(2+)-binding site is contributed by serine 229. K(+) contacts are provided by serine 244, isoleucine 246, and threonine 249. A Mg(2+)-binding site is contributed by threonine 250. (6S)-5-formyl-5,6,7,8-tetrahydrofolate is bound at residue lysine 445.

It belongs to the TRAFAC class TrmE-Era-EngA-EngB-Septin-like GTPase superfamily. TrmE GTPase family. As to quaternary structure, homodimer. Heterotetramer of two MnmE and two MnmG subunits. Requires K(+) as cofactor.

The protein localises to the cytoplasm. In terms of biological role, exhibits a very high intrinsic GTPase hydrolysis rate. Involved in the addition of a carboxymethylaminomethyl (cmnm) group at the wobble position (U34) of certain tRNAs, forming tRNA-cmnm(5)s(2)U34. The protein is tRNA modification GTPase MnmE of Rickettsia typhi (strain ATCC VR-144 / Wilmington).